The chain runs to 634 residues: Chaperone protein HtpG (634 aa).

The segment at 1–342 (MTVDTDKQTL…SADLSLNVSR (342 aa)) is a; substrate-binding. Residues 343 to 559 (EILQSGPVVD…QGDLGLQMRQ (217 aa)) form a b region. The segment at 560–634 (LLEASGQAVP…LNKLLLELSA (75 aa)) is c.

This sequence belongs to the heat shock protein 90 family. Homodimer.

The protein localises to the cytoplasm. In terms of biological role, molecular chaperone. Has ATPase activity. The protein is Chaperone protein HtpG of Xanthomonas campestris pv. campestris (strain ATCC 33913 / DSM 3586 / NCPPB 528 / LMG 568 / P 25).